We begin with the raw amino-acid sequence, 351 residues long: 3-dehydroquinate synthase (351 aa).

Residues 60 to 65 (DGEEYK), 94 to 98 (GVISD), 118 to 119 (TT), Lys-131, Lys-140, and 158 to 161 (FLKT) contribute to the NAD(+) site. Zn(2+)-binding residues include Glu-173, His-239, and His-256.

The protein belongs to the sugar phosphate cyclases superfamily. Dehydroquinate synthase family. Co(2+) serves as cofactor. It depends on Zn(2+) as a cofactor. The cofactor is NAD(+).

The protein localises to the cytoplasm. It catalyses the reaction 7-phospho-2-dehydro-3-deoxy-D-arabino-heptonate = 3-dehydroquinate + phosphate. It functions in the pathway metabolic intermediate biosynthesis; chorismate biosynthesis; chorismate from D-erythrose 4-phosphate and phosphoenolpyruvate: step 2/7. In terms of biological role, catalyzes the conversion of 3-deoxy-D-arabino-heptulosonate 7-phosphate (DAHP) to dehydroquinate (DHQ). The protein is 3-dehydroquinate synthase of Campylobacter jejuni subsp. doylei (strain ATCC BAA-1458 / RM4099 / 269.97).